Here is a 127-residue protein sequence, read N- to C-terminus: PRA1 family protein C (127 aa).

3 helical membrane-spanning segments follow: residues isoleucine 15–alanine 35, valine 53–leucine 73, and valine 76–methionine 96.

This sequence belongs to the PRA1 family.

It localises to the endoplasmic reticulum membrane. In terms of biological role, may be involved in both secretory and endocytic intracellular trafficking in the endosomal/prevacuolar compartments. The sequence is that of PRA1 family protein C (PRA1C) from Arabidopsis thaliana (Mouse-ear cress).